We begin with the raw amino-acid sequence, 147 residues long: Ribonuclease P protein component (147 aa).

The disordered stretch occupies residues 117–147 (TRPRGQSSHRTRASREATSAHTTAVGEQPTQ).

Belongs to the RnpA family. In terms of assembly, consists of a catalytic RNA component (M1 or rnpB) and a protein subunit.

It catalyses the reaction Endonucleolytic cleavage of RNA, removing 5'-extranucleotides from tRNA precursor.. Its function is as follows. RNaseP catalyzes the removal of the 5'-leader sequence from pre-tRNA to produce the mature 5'-terminus. It can also cleave other RNA substrates such as 4.5S RNA. The protein component plays an auxiliary but essential role in vivo by binding to the 5'-leader sequence and broadening the substrate specificity of the ribozyme. The polypeptide is Ribonuclease P protein component (Thermobifida fusca (strain YX)).